We begin with the raw amino-acid sequence, 38 residues long: Large ribosomal subunit protein bL36 (38 aa).

It belongs to the bacterial ribosomal protein bL36 family.

The chain is Large ribosomal subunit protein bL36 from Roseiflexus sp. (strain RS-1).